Reading from the N-terminus, the 623-residue chain is Bifunctional enzyme CysN/CysC (623 aa).

The interval 1–450 (MQSVIAYLKQ…HVARARIKGQ (450 aa)) is sulfate adenylyltransferase. In terms of domain architecture, tr-type G spans 14-228 (KPLLRFITCG…YLEALEPADV (215 aa)). The interval 23-30 (GSVDDGKS) is G1. Residue 23-30 (GSVDDGKS) coordinates GTP. Residues 81–85 (GITID) form a G2 region. A G3 region spans residues 102 to 105 (DCPG). Residues 102 to 106 (DCPGH) and 157 to 160 (NKMD) each bind GTP. Residues 157 to 160 (NKMD) form a G4 region. Residues 194–196 (SAL) form a G5 region. Residues 451–623 (TPKVLWFTGL…VLSLLGVEGK (173 aa)) are adenylyl-sulfate kinase. 459-466 (GLSGAGKS) is an ATP binding site. S533 (phosphoserine intermediate) is an active-site residue.

It in the C-terminal section; belongs to the APS kinase family. In the N-terminal section; belongs to the TRAFAC class translation factor GTPase superfamily. Classic translation factor GTPase family. CysN/NodQ subfamily. In terms of assembly, heterodimer composed of CysD, the smaller subunit, and CysNC.

It carries out the reaction sulfate + ATP + H(+) = adenosine 5'-phosphosulfate + diphosphate. The enzyme catalyses adenosine 5'-phosphosulfate + ATP = 3'-phosphoadenylyl sulfate + ADP + H(+). It participates in sulfur metabolism; hydrogen sulfide biosynthesis; sulfite from sulfate: step 1/3. The protein operates within sulfur metabolism; hydrogen sulfide biosynthesis; sulfite from sulfate: step 2/3. Its function is as follows. With CysD forms the ATP sulfurylase (ATPS) that catalyzes the adenylation of sulfate producing adenosine 5'-phosphosulfate (APS) and diphosphate, the first enzymatic step in sulfur assimilation pathway. APS synthesis involves the formation of a high-energy phosphoric-sulfuric acid anhydride bond driven by GTP hydrolysis by CysN coupled to ATP hydrolysis by CysD. APS kinase catalyzes the synthesis of activated sulfate. In Xylella fastidiosa (strain Temecula1 / ATCC 700964), this protein is Bifunctional enzyme CysN/CysC (cysNC).